Consider the following 123-residue polypeptide: MALTQEDIINAVAEMSVMEVAELVSAMEEKFGVSAAAAVVAGPGGGEAEEAEEQTEFDLVLTSAGEKKVNVIKVVREITGLGLKEAKAAVDGAPATLKEGMSKEDGDEAKTKLEEAGASVELK.

An N6-methyllysine modification is found at Lys84. The interval 94-123 is disordered; sequence PATLKEGMSKEDGDEAKTKLEEAGASVELK. Residues 100 to 115 are compositionally biased toward basic and acidic residues; sequence GMSKEDGDEAKTKLEE.

This sequence belongs to the bacterial ribosomal protein bL12 family. As to quaternary structure, homodimer. Part of the ribosomal stalk of the 50S ribosomal subunit. Forms a multimeric L10(L12)X complex, where L10 forms an elongated spine to which 2 to 4 L12 dimers bind in a sequential fashion. Binds GTP-bound translation factors.

In terms of biological role, seems to be the binding site for several of the factors involved in protein synthesis and appears to be essential for accurate translation. Its function is as follows. Forms part of the ribosomal stalk which helps the ribosome interact with GTP-bound translation factors. Is thus essential for accurate translation. This chain is Large ribosomal subunit protein bL12, found in Halophilic eubacterium NRCC 41227.